The sequence spans 103 residues: Large ribosomal subunit protein bL21 (103 aa).

The protein belongs to the bacterial ribosomal protein bL21 family. As to quaternary structure, part of the 50S ribosomal subunit. Contacts protein L20.

Its function is as follows. This protein binds to 23S rRNA in the presence of protein L20. The chain is Large ribosomal subunit protein bL21 from Ruthia magnifica subsp. Calyptogena magnifica.